Consider the following 46-residue polypeptide: Replication-associated protein (46 aa).

Seems to play a role in virus replication. The chain is Replication-associated protein from Solanum tuberosum (Potato).